The following is a 546-amino-acid chain: Chaperonin GroEL (546 aa).

Residues 30–33 (TLGP), K51, 87–91 (DGTTT), G415, and D495 each bind ATP.

Belongs to the chaperonin (HSP60) family. In terms of assembly, forms a cylinder of 14 subunits composed of two heptameric rings stacked back-to-back. Interacts with the co-chaperonin GroES.

The protein resides in the cytoplasm. It carries out the reaction ATP + H2O + a folded polypeptide = ADP + phosphate + an unfolded polypeptide.. Together with its co-chaperonin GroES, plays an essential role in assisting protein folding. The GroEL-GroES system forms a nano-cage that allows encapsulation of the non-native substrate proteins and provides a physical environment optimized to promote and accelerate protein folding. The polypeptide is Chaperonin GroEL (Brucella melitensis biotype 1 (strain ATCC 23456 / CCUG 17765 / NCTC 10094 / 16M)).